We begin with the raw amino-acid sequence, 222 residues long: ATP-dependent Clp protease proteolytic subunit (222 aa).

Catalysis depends on serine 125, which acts as the Nucleophile. Histidine 150 is an active-site residue.

Belongs to the peptidase S14 family. In terms of assembly, fourteen ClpP subunits assemble into 2 heptameric rings which stack back to back to give a disk-like structure with a central cavity, resembling the structure of eukaryotic proteasomes.

The protein localises to the cytoplasm. The enzyme catalyses Hydrolysis of proteins to small peptides in the presence of ATP and magnesium. alpha-casein is the usual test substrate. In the absence of ATP, only oligopeptides shorter than five residues are hydrolyzed (such as succinyl-Leu-Tyr-|-NHMec, and Leu-Tyr-Leu-|-Tyr-Trp, in which cleavage of the -Tyr-|-Leu- and -Tyr-|-Trp bonds also occurs).. Cleaves peptides in various proteins in a process that requires ATP hydrolysis. Has a chymotrypsin-like activity. Plays a major role in the degradation of misfolded proteins. The sequence is that of ATP-dependent Clp protease proteolytic subunit from Porphyromonas gingivalis (strain ATCC BAA-308 / W83).